We begin with the raw amino-acid sequence, 436 residues long: MAKKMKLSDITNMFAGMDVEALEGVTIEGDIEIDLGGLGGGFDPMLAAALGQESAVLAQHFARLAGMFGYPVGIGAPAAPAVSPALAAPKLKDLIPAKFDVANIAEWATEIQEVPIGNTSADGGSRGKRVMLGGEKALPFYFDAPMPNRNQVTIDVFDMRIGLAKAVKENYDEVMDSPGEWAKKNVEKFNADMITIHLISTDPLIKDTPAKEAAKTVEEVLQAVDVPIAIGGSGNPQKDPEVLARAAEVSEGERCLLASASLNLDYAAIAEAALKYDHDVLSWTQLDMNAQKELNRKLMKQCNVPRDRIIMDPTTAALGYGLDYAYTNMERIRLAALMGDDELTFPMSSGTTNAWGARESWMVSSPLKEDSDWGPREYRGPIWEIVTGLSLAIAGNDLFMMMHPTSVAVLKQITQTLFGMIDTEQVDVANWIGAEV.

It belongs to the CdhD family. In terms of assembly, heterodimer of delta and gamma chains. The ACDS complex is made up of alpha, epsilon, beta, gamma and delta chains with a probable stoichiometry of (alpha(2)epsilon(2))(4)-beta(8)-(gamma(1)delta(1))(8) (Potential).

The protein operates within one-carbon metabolism; methanogenesis from acetate. Functionally, part of a complex that catalyzes the reversible cleavage of acetyl-CoA, allowing growth on acetate as sole source of carbon and energy. Probably maintains the overall quaternary structure of the ACDS complex. In Methanosarcina acetivorans (strain ATCC 35395 / DSM 2834 / JCM 12185 / C2A), this protein is Acetyl-CoA decarbonylase/synthase complex subunit delta 1 (cdhD1).